The following is a 132-amino-acid chain: Putative F-box protein At4g05620 (132 aa).

The 47-residue stretch at 17-63 folds into the F-box domain; the sequence is QKKSLSLPHDVLVSCLAHVSRLHYSILSLVLKNFRSLIASPELYKTR.

The polypeptide is Putative F-box protein At4g05620 (Arabidopsis thaliana (Mouse-ear cress)).